A 105-amino-acid polypeptide reads, in one-letter code: Protamine-2 (105 aa).

The segment at 1 to 74 (MVRYRMRSPS…RRSCRRRRRH (74 aa)) is disordered. S8 and S10 each carry phosphoserine. The span at 33–42 (NPERVEDYGR) shows a compositional bias: basic and acidic residues. The segment covering 43–74 (THRGHHRHRRCSRKRLHRIHKRRRSCRRRRRH) has biased composition (basic residues).

It belongs to the protamine P2 family. In terms of assembly, interacts with TDRP. In terms of processing, proteolytic processing into mature chains is required for histone eviction during spermatogenesis. Transition proteins (TNP1 and TNP2) are required for processing. As to expression, testis.

The protein localises to the nucleus. Its subcellular location is the chromosome. Its function is as follows. Protamines substitute for histones in the chromatin of sperm during the haploid phase of spermatogenesis. They compact sperm DNA into a highly condensed, stable and inactive complex. In Rattus tunneyi (Tunney's rat), this protein is Protamine-2 (Prm2).